A 190-amino-acid polypeptide reads, in one-letter code: MFGMIKNSLFGGVENNEGKLVSKGEKDGVAFEEREYEGGKFVSTEVSGKPFDEASKEAVLRLLKYVGGSNQKYAGMGMTSPVVITSYPAENETLQPNVKVLLRIPSQYQADPPVPTDDTIHIEDRESVTFYSTQFGGYAKEADYVSHAAKLRSCLGPDISYHTDHYMCCGYDPPMKPYGRRNEVWFIKNN.

Belongs to the HEBP family. Monomer.

The protein resides in the cytoplasm. May bind free porphyrinogens that may be present in the cell and thus facilitate removal of these potentially toxic compound. Binds with a high affinity to one molecule of heme or porphyrins. It binds metalloporphyrins, free porphyrins and N-methylprotoporphyrin with similar affinities. The protein is Heme-binding protein 1 (hebp1) of Xenopus tropicalis (Western clawed frog).